The sequence spans 304 residues: MRFGGVVSLVLGFIVSVLAGPLHPRAASSTQQPVDVTYKIEPFTQAAGLVQQTYCSPSSYEPGLQLGDATFLWRIGDGDQRQRVNLYHSESLGIAVAIQGTNGSSTRSILNDFQYNPFDPDERYSQYYPKGAKIMNGFQIAYVKLVDDIFRALKKYKREKNESRVTVIGHSQGAAIGLLAAMDIELRLDGGLFRSYLFGLPRVGNPTFASFVDRTIGHKLRWAINGRDWVPTVPIHIYGYQHPSNYIWIYPGNSTNWKLYPGQENVHGIPTVPRVFNNNDHQGIYFHTQIGGVDGECPARVGAH.

Positions 1–19 are cleaved as a signal peptide; sequence MRFGGVVSLVLGFIVSVLA. Cys55 and Cys297 are oxidised to a cystine. Asn102 and Asn161 each carry an N-linked (GlcNAc...) asparagine glycan. Ser171 functions as the Nucleophile in the catalytic mechanism. The active site involves Asp228. N-linked (GlcNAc...) asparagine glycosylation is present at Asn253. Residue His281 is part of the active site.

It belongs to the AB hydrolase superfamily. Lipase family. Class 3 subfamily.

The protein localises to the secreted. The protein resides in the cell wall. The enzyme catalyses a monoacylglycerol + H2O = glycerol + a fatty acid + H(+). It carries out the reaction a diacylglycerol + H2O = a monoacylglycerol + a fatty acid + H(+). Functionally, secreted lipase involved in Dandruff and seborrheic dermatitis (D/SD) probably via lipase-mediated breakdown of sebaceous lipids and release of irritating free fatty acids. Shows activity against monoglyceride and diglyceride substrates, but not triglyceride substrates and does not exhibit regio-selective production of diacylglycerols. Cleaves oleic acid from 1,2 isomers of diolein on both the 1 and the 2 position of the glycerol backbone, resulting mainly in free fatty acids but no monoolein is detected. Shows activity on monoolein and liberates mostly free fatty acids, but can also perform the reverse reaction and produce diolein. This is Secreted mono- and diacylglycerol lipase MDL4 from Malassezia globosa (strain ATCC MYA-4612 / CBS 7966) (Dandruff-associated fungus).